Consider the following 100-residue polypeptide: Urease subunit gamma (100 aa).

Belongs to the urease gamma subunit family. As to quaternary structure, heterotrimer of UreA (gamma), UreB (beta) and UreC (alpha) subunits. Three heterotrimers associate to form the active enzyme.

Its subcellular location is the cytoplasm. It catalyses the reaction urea + 2 H2O + H(+) = hydrogencarbonate + 2 NH4(+). It functions in the pathway nitrogen metabolism; urea degradation; CO(2) and NH(3) from urea (urease route): step 1/1. The chain is Urease subunit gamma from Bradyrhizobium diazoefficiens (strain JCM 10833 / BCRC 13528 / IAM 13628 / NBRC 14792 / USDA 110).